The sequence spans 1595 residues: Pentafunctional AROM polypeptide (1595 aa).

The interval 1–384 (MGVPTKISIL…HEPRASTVSN (384 aa)) is 3-dehydroquinate synthase. NAD(+) is bound by residues 44–46 (DTN), 81–84 (ESSK), 114–116 (GGV), and D119. R130 contacts 7-phospho-2-dehydro-3-deoxy-D-arabino-heptonate. 139-140 (TT) contributes to the NAD(+) binding site. 7-phospho-2-dehydro-3-deoxy-D-arabino-heptonate-binding residues include D146 and K152. K161 is an NAD(+) binding site. N162 is a 7-phospho-2-dehydro-3-deoxy-D-arabino-heptonate binding site. Residues 179 to 182 (FLNT) and N190 each bind NAD(+). E194 is a binding site for Zn(2+). 7-phospho-2-dehydro-3-deoxy-D-arabino-heptonate contacts are provided by residues 194–197 (EVIK) and K250. E260 functions as the Proton acceptor; for 3-dehydroquinate synthase activity in the catalytic mechanism. 7-phospho-2-dehydro-3-deoxy-D-arabino-heptonate is bound by residues 264-268 (RNLLN) and H271. A Zn(2+)-binding site is contributed by H271. The active-site Proton acceptor; for 3-dehydroquinate synthase activity is the H275. Residues H287 and K356 each contribute to the 7-phospho-2-dehydro-3-deoxy-D-arabino-heptonate site. Residue H287 coordinates Zn(2+). The tract at residues 397–842 (VSPGVPKGLD…WDSLAQTFKV (446 aa)) is EPSP synthase. C824 functions as the For EPSP synthase activity in the catalytic mechanism. A shikimate kinase region spans residues 866–1057 (ASIFIIGMRG…RRKENTFFVS (192 aa)). 872 to 879 (GMRGAGKT) serves as a coordination point for ATP. Residues 1058 to 1278 (LTLPDLSLAA…AAPGQLSARE (221 aa)) are 3-dehydroquinase. H1181 functions as the Proton acceptor; for 3-dehydroquinate dehydratase activity in the catalytic mechanism. K1209 functions as the Schiff-base intermediate with substrate; for 3-dehydroquinate dehydratase activity in the catalytic mechanism. The tract at residues 1291 to 1595 (AKKFAVIGNP…MGVSPSEDIL (305 aa)) is shikimate dehydrogenase.

This sequence in the N-terminal section; belongs to the sugar phosphate cyclases superfamily. Dehydroquinate synthase family. The protein in the 2nd section; belongs to the EPSP synthase family. In the 3rd section; belongs to the shikimate kinase family. It in the 4th section; belongs to the type-I 3-dehydroquinase family. This sequence in the C-terminal section; belongs to the shikimate dehydrogenase family. As to quaternary structure, homodimer. The cofactor is Zn(2+).

It is found in the cytoplasm. The enzyme catalyses 7-phospho-2-dehydro-3-deoxy-D-arabino-heptonate = 3-dehydroquinate + phosphate. It catalyses the reaction 3-dehydroquinate = 3-dehydroshikimate + H2O. The catalysed reaction is shikimate + NADP(+) = 3-dehydroshikimate + NADPH + H(+). It carries out the reaction shikimate + ATP = 3-phosphoshikimate + ADP + H(+). The enzyme catalyses 3-phosphoshikimate + phosphoenolpyruvate = 5-O-(1-carboxyvinyl)-3-phosphoshikimate + phosphate. The protein operates within metabolic intermediate biosynthesis; chorismate biosynthesis; chorismate from D-erythrose 4-phosphate and phosphoenolpyruvate: step 2/7. It participates in metabolic intermediate biosynthesis; chorismate biosynthesis; chorismate from D-erythrose 4-phosphate and phosphoenolpyruvate: step 3/7. It functions in the pathway metabolic intermediate biosynthesis; chorismate biosynthesis; chorismate from D-erythrose 4-phosphate and phosphoenolpyruvate: step 4/7. Its pathway is metabolic intermediate biosynthesis; chorismate biosynthesis; chorismate from D-erythrose 4-phosphate and phosphoenolpyruvate: step 5/7. The protein operates within metabolic intermediate biosynthesis; chorismate biosynthesis; chorismate from D-erythrose 4-phosphate and phosphoenolpyruvate: step 6/7. In terms of biological role, the AROM polypeptide catalyzes 5 consecutive enzymatic reactions in prechorismate polyaromatic amino acid biosynthesis. This chain is Pentafunctional AROM polypeptide, found in Ajellomyces capsulatus (strain G186AR / H82 / ATCC MYA-2454 / RMSCC 2432) (Darling's disease fungus).